The chain runs to 130 residues: uncharacterized protein (130 aa).

Residues 1–62 are disordered; the sequence is MRMYSSDAHE…ASGVGSSCKR (62 aa). Positions 21–30 are enriched in pro residues; that stretch reads PPHPLPPTGS.

This is an uncharacterized protein from Homo sapiens (Human).